We begin with the raw amino-acid sequence, 425 residues long: Endoplasmic reticulum junction formation protein lunapark (425 aa).

Residue glycine 2 is the site of N-myristoyl glycine attachment. At glycine 2–arginine 45 the chain is on the cytoplasmic side. Residues valine 15–leucine 41 are a coiled coil. The helical transmembrane segment at leucine 46 to leucine 66 threads the bilayer. Residues proline 67–threonine 77 are Lumenal-facing. A helical transmembrane segment spans residues leucine 78 to phenylalanine 98. The Cytoplasmic segment spans residues serine 99–lysine 425. A coiled-coil region spans residues arginine 101–threonine 128. Residues serine 114, serine 153, serine 177, serine 182, and serine 194 each carry the phosphoserine modification. Residues lysine 144–proline 242 are disordered. Over residues glycine 186–proline 195 the composition is skewed to pro residues. Position 211 is a phosphothreonine (threonine 211). Serine 222 bears the Phosphoserine mark. The C4-type; plays a role in ER morphology zinc finger occupies cysteine 271–cysteine 296. 3 positions are modified to phosphoserine: serine 316, serine 348, and serine 380. The segment at arginine 320–lysine 425 is disordered. Positions glutamate 384–serine 398 are enriched in acidic residues. Serine 411 carries the phosphoserine modification.

This sequence belongs to the lunapark family. Homodimer; homodimerization requires the C4-type zinc finger motif and decreases during mitosis in a phosphorylation-dependent manner. Myristoylated; myristoylation is necessary for the endoplasmic reticulum (ER) three-way ER tubular junction formation, but is not required neither for membrane translocation, membrane topology formation, nor for the specific localization to ER membranes. In terms of processing, phosphorylated. Phosphorylation occurs at Ser-177, Ser-182, Ser-222, Ser-316 and Ser-380 during interphase. Phosphorylation occurs at Ser-114, Ser-153, Ser-194, Thr-211 and Ser-348 during mitosis; these phosphorylations reduce both its homodimerization and the ER three-way tubular junction formation. Post-translationally, subject to proteasomal degradation following phosphorylation during mitosis. In terms of tissue distribution, expressed in most tissues at basal level, with reinforcement in distal limb buds, genital bud, and in parts of the central nervous system.

Its subcellular location is the endoplasmic reticulum membrane. Functionally, endoplasmic reticulum (ER)-shaping membrane protein that plays a role in determining ER morphology. Involved in the stabilization of nascent three-way ER tubular junctions within the ER network. May also play a role as a curvature-stabilizing protein within three-way ER tubular junction network. May be involved in limb and central nervous system development. The protein is Endoplasmic reticulum junction formation protein lunapark of Mus musculus (Mouse).